Here is a 156-residue protein sequence, read N- to C-terminus: Tripartite terminase subunit 2 (156 aa).

A disordered region spans residues 1–37 (MYESENASEHHPELEDVFSENTGDSNPSMGSSDSTRS). Positions 19 to 37 (SENTGDSNPSMGSSDSTRS) are enriched in polar residues.

The protein belongs to the herpesviridae TRM2 protein family. As to quaternary structure, associates with TRM1 and TRM3 to form the tripartite terminase complex.

The protein localises to the host nucleus. In terms of biological role, component of the molecular motor that translocates viral genomic DNA in empty capsid during DNA packaging. Forms a tripartite terminase complex together with TRM1 and TRM3 in the host cytoplasm. Once the complex reaches the host nucleus, it interacts with the capsid portal vertex. This portal forms a ring in which genomic DNA is translocated into the capsid. This Varicella-zoster virus (strain Dumas) (HHV-3) protein is Tripartite terminase subunit 2.